The sequence spans 581 residues: Prolactin receptor (581 aa).

The first 24 residues, 1 to 24 (MKENAASRVVFILLLFLSVSLLNG), serve as a signal peptide directing secretion. At 25–237 (QSPPEKPKLV…NDFPVKDTSM (213 aa)) the chain is on the extracellular side. Fibronectin type-III domains lie at 27–127 (PPEK…IVEP) and 129–229 (PPAN…IPND). Cysteines 36 and 46 form a disulfide. N-linked (GlcNAc...) asparagine glycosylation occurs at asparagine 59. A disulfide bond links cysteine 75 and cysteine 86. N-linked (GlcNAc...) asparagine glycosylation occurs at asparagine 132. Zn(2+) is bound by residues aspartate 211 and histidine 212. The short motif at 215–219 (WSEWS) is the WSXWS motif element. A helical transmembrane segment spans residues 238-258 (WIFVAILSAVICLIMVWAVAL). At 259 to 581 (KGYSMVTCIL…PAKKAPPALP (323 aa)) the chain is on the cytoplasmic side. The short motif at 267 to 275 (ILPPVPGPK) is the Box 1 motif element. Disordered regions lie at residues 324–384 (QLMP…EKLE) and 458–499 (DQHA…PRPQ). Basic and acidic residues-rich tracts occupy residues 329 to 349 (PSKEHTEQGVKPMHLDLDSDS), 375 to 384 (HTPEGPEKLE), and 469 to 483 (ETGREGKATKQRESE).

It belongs to the type I cytokine receptor family. Type 1 subfamily. As to quaternary structure, interacts with SMARCA1. Interacts with NEK3 and VAV2 and this interaction is prolactin-dependent. As to expression, expressed in all tissues examined; liver, peripheral blood lymphocytes, endometrium, corpus luteum, intestine, fetal thymus, fetal spleen, fetal liver and fetal brain.

It is found in the membrane. Functionally, this is a receptor for the anterior pituitary hormone prolactin. The chain is Prolactin receptor (PRLR) from Bos taurus (Bovine).